The primary structure comprises 113 residues: DNA-binding protein Mevan_1162 (113 aa).

Basic and acidic residues predominate over residues methionine 1–glutamine 12. The tract at residues methionine 1–glutamate 22 is disordered.

The protein belongs to the PDCD5 family.

In Methanococcus vannielii (strain ATCC 35089 / DSM 1224 / JCM 13029 / OCM 148 / SB), this protein is DNA-binding protein Mevan_1162.